We begin with the raw amino-acid sequence, 45 residues long: Large ribosomal subunit protein bL34 (45 aa).

This sequence belongs to the bacterial ribosomal protein bL34 family.

In Salinispora arenicola (strain CNS-205), this protein is Large ribosomal subunit protein bL34.